A 228-amino-acid polypeptide reads, in one-letter code: Auxin-responsive protein IAA16 (228 aa).

The EAR-like (transcriptional repression) motif lies at 19–23 (LSLAL). Over residues 28–39 (SSSGLQGNTSTA) the composition is skewed to polar residues. Disordered stretches follow at residues 28–57 (SSSGLQGNTSTAADGAKGNDGFKASRPAAP) and 70–90 (NLASSSSSSKPPRGGRDAAAA). The 118-residue stretch at 97–214 (ARFVKVNMDG…RVLRSSDLNA (118 aa)) folds into the PB1 domain.

It belongs to the Aux/IAA family. Homodimers and heterodimers. Expressed in roots, flowers and seedlings.

The protein resides in the nucleus. Its function is as follows. Aux/IAA proteins are short-lived transcriptional factors that function as repressors of early auxin response genes at low auxin concentrations. This is Auxin-responsive protein IAA16 (IAA16) from Oryza sativa subsp. japonica (Rice).